The following is a 506-amino-acid chain: D-alanine--D-alanyl carrier protein ligase (506 aa).

152–153 (TS) is an ATP binding site. D-alanine is bound at residue aspartate 197. 292 to 297 (NTYGPT) serves as a coordination point for ATP. Position 301 (valine 301) interacts with D-alanine. ATP is bound by residues aspartate 383, 395–398 (YRGR), and lysine 494. Lysine 494 lines the D-alanine pocket.

It belongs to the ATP-dependent AMP-binding enzyme family. DltA subfamily.

The protein resides in the cytoplasm. The enzyme catalyses holo-[D-alanyl-carrier protein] + D-alanine + ATP = D-alanyl-[D-alanyl-carrier protein] + AMP + diphosphate. It functions in the pathway cell wall biogenesis; lipoteichoic acid biosynthesis. In terms of biological role, catalyzes the first step in the D-alanylation of lipoteichoic acid (LTA), the activation of D-alanine and its transfer onto the D-alanyl carrier protein (Dcp) DltC. In an ATP-dependent two-step reaction, forms a high energy D-alanyl-AMP intermediate, followed by transfer of the D-alanyl residue as a thiol ester to the phosphopantheinyl prosthetic group of the Dcp. D-alanylation of LTA plays an important role in modulating the properties of the cell wall in Gram-positive bacteria, influencing the net charge of the cell wall. In Lacticaseibacillus rhamnosus (Lactobacillus rhamnosus), this protein is D-alanine--D-alanyl carrier protein ligase.